Reading from the N-terminus, the 974-residue chain is Collagen alpha-1(I) chain (974 aa).

The segment covering G1–R14 has biased composition (low complexity). Residues G1–P974 are disordered. P17, P20, P23, P32, P35, P38, P53, P68, P75, and P81 each carry 4-hydroxyproline. Low complexity predominate over residues P25–M44. The span at N56–G73 shows a compositional bias: basic and acidic residues. K84 bears the 5-hydroxylysine; alternate mark. Residue K84 is glycosylated (O-linked (Gal...) hydroxylysine; alternate). S90 is subject to Phosphoserine. Low complexity predominate over residues D98–N114. 4-hydroxyproline is present on residues P108, P111, P117, P126, P132, P153, P162, P165, P192, P195, P207, P213, P222, P228, P231, and P245. Residues P132–A150 show a composition bias toward low complexity. A compositionally biased stretch (pro residues) spans P152 to F164. Over residues A198–P228 the composition is skewed to low complexity. The residue at position 248 (K248) is a 5-hydroxylysine. 8 positions are modified to 4-hydroxyproline: P254, P257, P269, P278, P293, P299, P308, and P314. The segment covering G303–G312 has biased composition (gly residues). Residue K323 is modified to 5-hydroxylysine. 24 positions are modified to 4-hydroxyproline: P328, P337, P343, P349, P358, P361, P370, P379, P385, P397, P406, P415, P418, P436, P454, P460, P466, P472, P484, P493, P505, P520, P527, and P536. The span at K352–R378 shows a compositional bias: low complexity. Residues A387–P406 are compositionally biased toward low complexity. Residues A504–P517 are compositionally biased toward low complexity. K548 is subject to 5-hydroxylysine. 4-hydroxyproline occurs at positions 554, 569, and 575. The segment covering S581–A595 has biased composition (low complexity). Position 584 is a phosphoserine (S584). 4-hydroxyproline is present on residues P596, P602, P605, P614, P620, P638, P647, and P656. Residues A608–A635 are compositionally biased toward low complexity. Over residues P637–P649 the composition is skewed to pro residues. K659 bears the 5-hydroxylysine mark. Over residues S664 to V680 the composition is skewed to low complexity. P668 and P674 each carry 4-hydroxyproline. A 3-hydroxyproline modification is found at P682. P683, P692, P695, P716, P725, P733, P742, P760, P769, P772, P778, P793, P799, P805, P814, and P820 each carry 4-hydroxyproline. A compositionally biased stretch (low complexity) spans E709–E718. Over residues K730–P742 the composition is skewed to low complexity. The span at P792–A802 shows a compositional bias: pro residues. The span at P804 to P826 shows a compositional bias: low complexity. Residues P828–V844 show a composition bias toward pro residues. 5-hydroxylysine is present on K829. 4-hydroxyproline is present on residues P832, P835, and P838. Over residues A865–P879 the composition is skewed to low complexity. Residues R880–G894 show a composition bias toward basic and acidic residues. K883 is modified (5-hydroxylysine). Residues P905, P908, P926, and P941 each carry the 4-hydroxyproline modification. Over residues P908–P941 the composition is skewed to low complexity. Residue P946 is modified to 3-hydroxyproline. 4-hydroxyproline is present on P947. Over residues V959–P974 the composition is skewed to pro residues. P961 is subject to 3-hydroxyproline. 4-hydroxyproline is present on P962. P964 carries the post-translational modification 3-hydroxyproline. P965 is modified (4-hydroxyproline). 3-hydroxyproline is present on P967. A 4-hydroxyproline mark is found at P968, P971, and P974.

Belongs to the fibrillar collagen family. In terms of assembly, trimers of one alpha 2(I) and two alpha 1(I) chains. In terms of processing, contains mostly 4-hydroxyproline. Proline residues at the third position of the tripeptide repeating unit (G-X-Y) are hydroxylated in some or all of the chains. Contains 3-hydroxyproline at a few sites. This modification occurs on the first proline residue in the sequence motif Gly-Pro-Hyp, where Hyp is 4-hydroxyproline. Post-translationally, lysine residues at the third position of the tripeptide repeating unit (G-X-Y) are 5-hydroxylated in some or all of the chains. In terms of processing, O-glycosylated on hydroxylated lysine residues. The O-linked glycan consists of a Glc-Gal disaccharide. Expressed in bones.

The protein resides in the secreted. Its subcellular location is the extracellular space. It is found in the extracellular matrix. In terms of biological role, type I collagen is a member of group I collagen (fibrillar forming collagen). This chain is Collagen alpha-1(I) chain, found in Scelidodon sp. (strain SLP-2019) (South American ground sloth).